Here is a 510-residue protein sequence, read N- to C-terminus: Histidine ammonia-lyase (510 aa).

Residues Ala-143–Gly-145 constitute a cross-link (5-imidazolinone (Ala-Gly)). Ser-144 is subject to 2,3-didehydroalanine (Ser).

Belongs to the PAL/histidase family. Contains an active site 4-methylidene-imidazol-5-one (MIO), which is formed autocatalytically by cyclization and dehydration of residues Ala-Ser-Gly.

The protein resides in the cytoplasm. It carries out the reaction L-histidine = trans-urocanate + NH4(+). It participates in amino-acid degradation; L-histidine degradation into L-glutamate; N-formimidoyl-L-glutamate from L-histidine: step 1/3. The chain is Histidine ammonia-lyase from Photobacterium profundum (strain SS9).